The sequence spans 299 residues: Lipoyl synthase (299 aa).

7 residues coordinate [4Fe-4S] cluster: C45, C50, C56, C71, C75, C78, and S284. In terms of domain architecture, Radical SAM core spans 57–273 (YSKGTATFMI…GDVALAKDFL (217 aa)).

This sequence belongs to the radical SAM superfamily. Lipoyl synthase family. It depends on [4Fe-4S] cluster as a cofactor.

The protein localises to the cytoplasm. It catalyses the reaction [[Fe-S] cluster scaffold protein carrying a second [4Fe-4S](2+) cluster] + N(6)-octanoyl-L-lysyl-[protein] + 2 oxidized [2Fe-2S]-[ferredoxin] + 2 S-adenosyl-L-methionine + 4 H(+) = [[Fe-S] cluster scaffold protein] + N(6)-[(R)-dihydrolipoyl]-L-lysyl-[protein] + 4 Fe(3+) + 2 hydrogen sulfide + 2 5'-deoxyadenosine + 2 L-methionine + 2 reduced [2Fe-2S]-[ferredoxin]. It participates in protein modification; protein lipoylation via endogenous pathway; protein N(6)-(lipoyl)lysine from octanoyl-[acyl-carrier-protein]: step 2/2. Catalyzes the radical-mediated insertion of two sulfur atoms into the C-6 and C-8 positions of the octanoyl moiety bound to the lipoyl domains of lipoate-dependent enzymes, thereby converting the octanoylated domains into lipoylated derivatives. The polypeptide is Lipoyl synthase (Desulfotalea psychrophila (strain LSv54 / DSM 12343)).